The following is a 503-amino-acid chain: MSQKQMKEAFVSNQNGTSVLEITEGLCLPALCILCRGLLIILSQQLCSSLHNSRTRFLVDFAFLIVPLVTTLTIFSSFVLLEYLVAIILGAGLLYEIYCRRTCYARMPFQKICEKFLKVSLESEHIPAISCFRVVNSAFTAVAILAVDFPLFPRRYAKTELYGTGAMDYGVGGFIFGSAMVSPEVRRKYTKGSRFCYLTKSLYSLWPLVFLGVGRLVAIKSVDYQEHLTEYGVHWNFFFTLIAVKLITSLLLLICPLNRSWVVAISIAALYQLALDFTPLKSLILYGTDGSGTRVGLLNANREGIISVLGYVAVHMAGVQTGLYVLKKRSHIKDWIKVACCILLTAIGLFISLYIVQVNVEVASRRMANLAFCIWIVASCLILLSSLLLGDIILSFAKFVIKEAAVPCSWKLIQSPTANKKHLESIVFDAKRKEPTLCLITAMNRNQLLFFLLSNVTTGLVNLSIDTLHSSTPWALCLLNLYMFTNCLIIYVLHLQDKTIKFW.

At 1 to 21 (MSQKQMKEAFVSNQNGTSVLE) the chain is on the lumenal side. N-linked (GlcNAc...) asparagine glycosylation is present at Asn-15. Residues 22-42 (ITEGLCLPALCILCRGLLIIL) form a helical membrane-spanning segment. Topologically, residues 43–56 (SQQLCSSLHNSRTR) are cytoplasmic. Residues 57-75 (FLVDFAFLIVPLVTTLTIF) form a helical membrane-spanning segment. Residues 76-78 (SSF) lie on the Lumenal side of the membrane. A helical membrane pass occupies residues 79–98 (VLLEYLVAIILGAGLLYEIY). Residues 99-131 (CRRTCYARMPFQKICEKFLKVSLESEHIPAISC) lie on the Cytoplasmic side of the membrane. The helical transmembrane segment at 132–152 (FRVVNSAFTAVAILAVDFPLF) threads the bilayer. Residues 153–160 (PRRYAKTE) lie on the Lumenal side of the membrane. The chain crosses the membrane as a helical span at residues 161–181 (LYGTGAMDYGVGGFIFGSAMV). Residues 182–201 (SPEVRRKYTKGSRFCYLTKS) are Cytoplasmic-facing. The chain crosses the membrane as a helical span at residues 202–222 (LYSLWPLVFLGVGRLVAIKSV). Topologically, residues 223–236 (DYQEHLTEYGVHWN) are lumenal. A helical membrane pass occupies residues 237–257 (FFFTLIAVKLITSLLLLICPL). Topologically, residues 258-259 (NR) are cytoplasmic. Residues 260 to 280 (SWVVAISIAALYQLALDFTPL) traverse the membrane as a helical segment. Residues 281 to 304 (KSLILYGTDGSGTRVGLLNANREG) are Lumenal-facing. Residues 305–325 (IISVLGYVAVHMAGVQTGLYV) traverse the membrane as a helical segment. Topologically, residues 326–337 (LKKRSHIKDWIK) are cytoplasmic. Residues 338–358 (VACCILLTAIGLFISLYIVQV) form a helical membrane-spanning segment. Over 359 to 369 (NVEVASRRMAN) the chain is Lumenal. A helical membrane pass occupies residues 370–390 (LAFCIWIVASCLILLSSLLLG). Residues 391–447 (DIILSFAKFVIKEAAVPCSWKLIQSPTANKKHLESIVFDAKRKEPTLCLITAMNRNQ) are Cytoplasmic-facing. Position 415 is a phosphoserine (Ser-415). Residues 448–468 (LLFFLLSNVTTGLVNLSIDTL) traverse the membrane as a helical segment. The Lumenal segment spans residues 469–472 (HSST). Residues 473–493 (PWALCLLNLYMFTNCLIIYVL) traverse the membrane as a helical segment. At 494 to 503 (HLQDKTIKFW) the chain is on the cytoplasmic side.

Belongs to the PIGW family.

The protein localises to the endoplasmic reticulum membrane. Its pathway is glycolipid biosynthesis; glycosylphosphatidylinositol-anchor biosynthesis. Acyltransferase that catalyzes the acyl transfer from an acyl-CoA at the 2-OH position of the inositol ring of glucosaminyl phosphatidylinositol (GlcN-PI) to generate glucosaminyl acyl phosphatidylinositol (GlcN-(acyl)PI) and participates in the fourth step of GPI-anchor biosynthesis. Required for the transport of GPI-anchored proteins to the plasma membrane. Acetylation during GPI-anchor biosynthesis is not essential for the subsequent mannosylation and is usually removed soon after the attachment of GPIs to proteins. This chain is Glucosaminyl-phosphatidylinositol-acyltransferase PIGW, found in Bos taurus (Bovine).